The primary structure comprises 116 residues: MASLLDGVNAATLRSDVPAFRPGDTVNVHVRVIEGNRSRIQQFKGVVIRRQGSGVSETFTVRKVSFSVGVERTFPVHSPIFEKIELVTRGDVRRAKLYFLRELRGKAAKIKEKRDN.

It belongs to the bacterial ribosomal protein bL19 family.

Its function is as follows. This protein is located at the 30S-50S ribosomal subunit interface and may play a role in the structure and function of the aminoacyl-tRNA binding site. This Streptomyces griseus subsp. griseus (strain JCM 4626 / CBS 651.72 / NBRC 13350 / KCC S-0626 / ISP 5235) protein is Large ribosomal subunit protein bL19.